The sequence spans 181 residues: Cyclic AMP-dependent transcription factor ATF-3 (181 aa).

Residues 76 to 96 are disordered; sequence VTKSEVAPEEDERKRRRRERN. Lysine 78 is covalently cross-linked (Glycyl lysine isopeptide (Lys-Gly) (interchain with G-Cter in SUMO2)). A bZIP domain is found at 86–149; sequence DERKRRRRER…QHLIYMLNLH (64 aa). Residues 88–110 are basic motif; that stretch reads RKRRRRERNKIAAAKCRNKKKEK. The segment at 114 to 142 is leucine-zipper; it reads LQKESEKLESVNAELKAQIEELKNEKQHL. Threonine 162 is modified (phosphothreonine). Lysine 175 participates in a covalent cross-link: Glycyl lysine isopeptide (Lys-Gly) (interchain with G-Cter in SUMO2).

The protein belongs to the bZIP family. ATF subfamily. As to quaternary structure, ATF3 alone can bind DNA, but it preferentially forms heteromeric complexes with JUN and JUNB and does not interact with FOS. In terms of tissue distribution, expressed in tissues containing skeletal muscle or smooth muscle. Expressed in cutaneous and muscular sensory neurons.

The protein localises to the nucleus. Functionally, this protein binds the cAMP response element (CRE) (consensus: 5'-GTGACGT[AC][AG]-3'), a sequence present in many viral and cellular promoters. Represses transcription from promoters with ATF sites. It may repress transcription by stabilizing the binding of inhibitory cofactors at the promoter. The sequence is that of Cyclic AMP-dependent transcription factor ATF-3 (Atf3) from Rattus norvegicus (Rat).